The sequence spans 404 residues: Probable tRNA sulfurtransferase (404 aa).

A THUMP domain is found at 60–165; sequence TAVAESLKQV…EEAAYLSYET (106 aa). ATP-binding positions include 183–184, 208–209, arginine 265, glycine 287, and glutamine 296; these read ML and HF.

Belongs to the ThiI family.

The protein localises to the cytoplasm. It carries out the reaction [ThiI sulfur-carrier protein]-S-sulfanyl-L-cysteine + a uridine in tRNA + 2 reduced [2Fe-2S]-[ferredoxin] + ATP + H(+) = [ThiI sulfur-carrier protein]-L-cysteine + a 4-thiouridine in tRNA + 2 oxidized [2Fe-2S]-[ferredoxin] + AMP + diphosphate. The enzyme catalyses [ThiS sulfur-carrier protein]-C-terminal Gly-Gly-AMP + S-sulfanyl-L-cysteinyl-[cysteine desulfurase] + AH2 = [ThiS sulfur-carrier protein]-C-terminal-Gly-aminoethanethioate + L-cysteinyl-[cysteine desulfurase] + A + AMP + 2 H(+). The protein operates within cofactor biosynthesis; thiamine diphosphate biosynthesis. Functionally, catalyzes the ATP-dependent transfer of a sulfur to tRNA to produce 4-thiouridine in position 8 of tRNAs, which functions as a near-UV photosensor. Also catalyzes the transfer of sulfur to the sulfur carrier protein ThiS, forming ThiS-thiocarboxylate. This is a step in the synthesis of thiazole, in the thiamine biosynthesis pathway. The sulfur is donated as persulfide by IscS. This chain is Probable tRNA sulfurtransferase, found in Streptococcus pneumoniae serotype 2 (strain D39 / NCTC 7466).